The following is a 538-amino-acid chain: Cytochrome P450 monooxygenase astC (538 aa).

A helical membrane pass occupies residues 18-38 (ALMLPALVGCALLIYRAFFAI). Position 481 (cysteine 481) interacts with heme.

Belongs to the cytochrome P450 family. Heme is required as a cofactor.

Its subcellular location is the membrane. It functions in the pathway secondary metabolite biosynthesis; terpenoid biosynthesis. Cytochrome P450 monooxygenase; part of the gene cluster that mediates the biosynthesis of the sesquiterpenoid aspterric acid (AA), an inhibitor of dihydroxy-acid dehydratase (DHAD) effective as an herbicide. AstC catalyzes the third and last step within the pathway and converts the alpha-epoxy carboxylate intermediate produced by the cytochrome P450 monooxygenase astC from (-)daucane into the tricyclic aspterric acid. This chain is Cytochrome P450 monooxygenase astC, found in Aspergillus terreus (strain NIH 2624 / FGSC A1156).